Reading from the N-terminus, the 146-residue chain is Large ribosomal subunit protein uL15 (146 aa).

The segment covering 1 to 13 (MKLHELKPAEGSR) has biased composition (basic and acidic residues). The tract at residues 1-56 (MKLHELKPAEGSRKVRNRVGRGAATGNGKTSGRGQKGQKARSGGSVRPGFEGGQLP) is disordered. The segment covering 23–35 (AATGNGKTSGRGQ) has biased composition (gly residues).

The protein belongs to the universal ribosomal protein uL15 family. Part of the 50S ribosomal subunit.

Binds to the 23S rRNA. The protein is Large ribosomal subunit protein uL15 of Staphylococcus saprophyticus subsp. saprophyticus (strain ATCC 15305 / DSM 20229 / NCIMB 8711 / NCTC 7292 / S-41).